Consider the following 906-residue polypeptide: Eukaryotic translation initiation factor 4 gamma 2 (906 aa).

Methionine 1 carries the N-acetylmethionine modification. The interval 1 to 71 (MESAIAEGGA…SAANNSANEK (71 aa)) is disordered. The residue at position 11 (serine 11) is a Phosphoserine. The region spanning 78 to 308 (FRKVRGILNK…QDTVELREHH (231 aa)) is the MIF4G domain. Threonine 89 carries the phosphothreonine modification. Position 359 is an omega-N-methylarginine (arginine 359). Position 394 is a phosphoserine (serine 394). An N6-methyllysine modification is found at lysine 430. Phosphoserine is present on serine 442. The interval 497-540 (PPSAQPPRTQTPPLGQTPQLGLKTNPPLIQEKPAKTSKKPPPSK) is disordered. Residues 502 to 515 (PPRTQTPPLGQTPQ) are compositionally biased toward polar residues. An Omega-N-methylarginine modification is found at arginine 504. Threonine 507 and threonine 513 each carry phosphothreonine. Positions 542–665 (ELLKLTEAVV…SISELAQPLE (124 aa)) constitute an MI domain. Residue lysine 574 forms a Glycyl lysine isopeptide (Lys-Gly) (interchain with G-Cter in SUMO2) linkage. Residues 719 to 903 (EGKGLSFLFP…ETAEEEESEE (185 aa)) form the W2 domain. Serine 901 bears the Phosphoserine mark.

It belongs to the eukaryotic initiation factor 4G family. Interacts with the serine/threonine protein kinases MKNK1 and MKNK2. Binds EIF4A and EIF3. Interacts with MIF4GD. Interacts with DAZAP2. Post-translationally, phosphorylation; hyperphosphorylated during mitosis. As to expression, ubiquitously expressed in all tissues examined.

Its function is as follows. Appears to play a role in the switch from cap-dependent to IRES-mediated translation during mitosis, apoptosis and viral infection. Cleaved by some caspases and viral proteases. This chain is Eukaryotic translation initiation factor 4 gamma 2, found in Mus musculus (Mouse).